Here is a 204-residue protein sequence, read N- to C-terminus: Inactive ribonuclease-like protein 9 (204 aa).

A signal peptide spans 1 to 26; it reads MMRTPITTHPLLLLLLLQQLLQPVQF. 3 cysteine pairs are disulfide-bonded: cysteine 97/cysteine 152, cysteine 115/cysteine 167, and cysteine 122/cysteine 129. N-linked (GlcNAc...) asparagine glycans are attached at residues asparagine 130 and asparagine 142.

The protein belongs to the pancreatic ribonuclease family.

The protein resides in the secreted. Functionally, does not exhibit any ribonuclease activity. This is Inactive ribonuclease-like protein 9 (RNASE9) from Macaca nemestrina (Pig-tailed macaque).